We begin with the raw amino-acid sequence, 211 residues long: Probable GTP-binding protein EngB (211 aa).

An EngB-type G domain is found at 13 to 188; that stretch reads SGYEIAFAGR…ASVMAGRLHF (176 aa). Residues 21–28, 48–52, 67–70, 134–137, and 167–169 contribute to the GTP site; these read GRSNAGKS, GRTQM, DLPG, TKAD, and FSS. Residues S28 and T50 each contribute to the Mg(2+) site.

It belongs to the TRAFAC class TrmE-Era-EngA-EngB-Septin-like GTPase superfamily. EngB GTPase family. Mg(2+) serves as cofactor.

Its function is as follows. Necessary for normal cell division and for the maintenance of normal septation. The sequence is that of Probable GTP-binding protein EngB from Acinetobacter baumannii (strain ATCC 17978 / DSM 105126 / CIP 53.77 / LMG 1025 / NCDC KC755 / 5377).